A 908-amino-acid polypeptide reads, in one-letter code: Translation initiation factor IF-2 (908 aa).

Disordered regions lie at residues Glu-123 to Lys-154 and Lys-212 to Lys-278. The region spanning Glu-407–Lys-577 is the tr-type G domain. Residues Gly-416 to Thr-423 are G1. Gly-416–Thr-423 is a GTP binding site. Residues Gly-441 to His-445 form a G2 region. Residues Asp-463–Gly-466 form a G3 region. Residues Asp-463 to His-467 and Asn-517 to Asp-520 each bind GTP. The tract at residues Asn-517–Asp-520 is G4. The tract at residues Ser-553–Ile-555 is G5.

Belongs to the TRAFAC class translation factor GTPase superfamily. Classic translation factor GTPase family. IF-2 subfamily.

The protein resides in the cytoplasm. Its function is as follows. One of the essential components for the initiation of protein synthesis. Protects formylmethionyl-tRNA from spontaneous hydrolysis and promotes its binding to the 30S ribosomal subunits. Also involved in the hydrolysis of GTP during the formation of the 70S ribosomal complex. In Amoebophilus asiaticus (strain 5a2), this protein is Translation initiation factor IF-2.